A 337-amino-acid chain; its full sequence is Diacylglycerol O-acyltransferase 2-like protein 6 (337 aa).

2 helical membrane passes run 22–42 and 102–122; these read MPVY…FLVF and YIIA…NFAT.

Belongs to the diacylglycerol acyltransferase family.

The protein localises to the endoplasmic reticulum membrane. The catalysed reaction is 1,2-di-(9Z-octadecenoyl)-sn-glycerol + (9Z)-octadecenoyl-CoA = 1,2,3-tri-(9Z-octadecenoyl)-glycerol + CoA. Functionally, diglyceride acyltransferase that uses fatty acyl-CoA as substrate. Particularly active with oleate as a substrate. Has no wax synthase activity to produce wax esters. The sequence is that of Diacylglycerol O-acyltransferase 2-like protein 6 (DGAT2L6) from Bos taurus (Bovine).